The sequence spans 131 residues: MGINYSTVGEMKEGSYIVIDGEPCRVVEVTKAKTGKHGSAKANIIAVSIFTGAKKTLMAPVDSTVEVPIIEKRMGQVISNVGDKVQIMDLETYETFEIDMPTEEDVASKIKKDAEVEYWEVMGRKKIVRVK.

Hypusine is present on Lys-36.

It belongs to the eIF-5A family.

It localises to the cytoplasm. Functions by promoting the formation of the first peptide bond. This chain is Translation initiation factor 5A (eIF5A), found in Metallosphaera sedula (strain ATCC 51363 / DSM 5348 / JCM 9185 / NBRC 15509 / TH2).